A 312-amino-acid polypeptide reads, in one-letter code: Pectinesterase inhibitor 10 (312 aa).

The signal sequence occupies residues 1–25 (MNILSQTQILHLSIAILLFITTSSS). Composition is skewed to low complexity over residues 24-36 (SSSL…SPSL) and 44-55 (SPSSAPPSSLSP). The interval 24–141 (SSSLSPSSSS…PSSSSSTYSN (118 aa)) is disordered. Residues 56–75 (SSPPPLSLSPSSPPPPPPSS) are compositionally biased toward pro residues. Composition is skewed to low complexity over residues 76 to 85 (SPLSSLSPSL) and 93 to 104 (SPSSAPPSSLSP). Positions 105–124 (SSPPPLSLSPSSPPPPPPSS) are enriched in pro residues. Positions 125 to 137 (SPLSSLSPSSSSS) are enriched in low complexity. N141, N153, N185, and N200 each carry an N-linked (GlcNAc...) asparagine glycan. A disulfide bond links C152 and C161. An intrachain disulfide couples C218 to C268.

The protein belongs to the PMEI family.

The protein resides in the secreted. The protein localises to the extracellular space. Its subcellular location is the apoplast. Its function is as follows. Pectin methylesterase (PME) inhibitor involved in the maintenance of cell wall integrity in response to necrotrophic pathogens. Modulates PME activity and pectin methylesterification during infection by Botrytis cinerea and contributes to resistance against the pathogen. The protein is Pectinesterase inhibitor 10 of Arabidopsis thaliana (Mouse-ear cress).